The following is a 218-amino-acid chain: Probable GTP-binding protein EngB (218 aa).

Positions 44-218 (DRIEVCFAGR…LRATIATIET (175 aa)) constitute an EngB-type G domain. GTP is bound by residues 52–59 (GRSNVGKS), 79–83 (GRTQE), 97–100 (DLPG), 164–167 (TKSD), and 198–200 (TSS). Mg(2+)-binding residues include Ser-59 and Thr-81.

Belongs to the TRAFAC class TrmE-Era-EngA-EngB-Septin-like GTPase superfamily. EngB GTPase family. Mg(2+) is required as a cofactor.

Functionally, necessary for normal cell division and for the maintenance of normal septation. In Jannaschia sp. (strain CCS1), this protein is Probable GTP-binding protein EngB.